Reading from the N-terminus, the 123-residue chain is Large ribosomal subunit protein bL20 (123 aa).

The protein belongs to the bacterial ribosomal protein bL20 family.

In terms of biological role, binds directly to 23S ribosomal RNA and is necessary for the in vitro assembly process of the 50S ribosomal subunit. It is not involved in the protein synthesizing functions of that subunit. This Chlamydia trachomatis serovar L2b (strain UCH-1/proctitis) protein is Large ribosomal subunit protein bL20.